Here is a 225-residue protein sequence, read N- to C-terminus: Sirohydrochlorin ferrochelatase, chloroplastic (225 aa).

The N-terminal 46 residues, 1 to 46, are a transit peptide targeting the chloroplast; sequence MTTQSQFLVNLSYGGLASQSNLRANNRVSPSSCQITRTNRSWALPV. Fe cation contacts are provided by histidine 89 and histidine 155. The [4Fe-4S] cluster site is built by cysteine 199, cysteine 210, cysteine 213, and cysteine 219.

This sequence belongs to the CbiX family. SirB subfamily. Homodimer. Requires [4Fe-4S] cluster as cofactor.

It localises to the plastid. Its subcellular location is the chloroplast. It catalyses the reaction siroheme + 2 H(+) = sirohydrochlorin + Fe(2+). It participates in porphyrin-containing compound metabolism; siroheme biosynthesis; siroheme from sirohydrochlorin: step 1/1. Chelates iron to the siroheme precursor. Catalyzes the last step of the siroheme biosynthesis. Unlike its counterparts in bacteria, contains an [Fe-S] cluster which is not involved directly in the enzymatic reaction, but may play regulatory role in iron, sulfur and tetrapyrrole metabolism. The [Fe-S] cluster is required for normal plant growth. This chain is Sirohydrochlorin ferrochelatase, chloroplastic, found in Arabidopsis thaliana (Mouse-ear cress).